A 363-amino-acid chain; its full sequence is 3-dehydroquinate synthase (363 aa).

NAD(+)-binding positions include 134–135 (TT), lysine 147, and lysine 156. Residues glutamate 189, histidine 254, and histidine 271 each contribute to the Zn(2+) site.

Belongs to the sugar phosphate cyclases superfamily. Dehydroquinate synthase family. Co(2+) serves as cofactor. Requires Zn(2+) as cofactor. NAD(+) is required as a cofactor.

The protein resides in the cytoplasm. The enzyme catalyses 7-phospho-2-dehydro-3-deoxy-D-arabino-heptonate = 3-dehydroquinate + phosphate. It participates in metabolic intermediate biosynthesis; chorismate biosynthesis; chorismate from D-erythrose 4-phosphate and phosphoenolpyruvate: step 2/7. Catalyzes the conversion of 3-deoxy-D-arabino-heptulosonate 7-phosphate (DAHP) to dehydroquinate (DHQ). This chain is 3-dehydroquinate synthase, found in Prochlorococcus marinus (strain MIT 9215).